Consider the following 155-residue polypeptide: Endoribonuclease YbeY (155 aa).

Residues histidine 113, histidine 117, and histidine 123 each coordinate Zn(2+).

It belongs to the endoribonuclease YbeY family. Zn(2+) serves as cofactor.

It localises to the cytoplasm. Functionally, single strand-specific metallo-endoribonuclease involved in late-stage 70S ribosome quality control and in maturation of the 3' terminus of the 16S rRNA. The polypeptide is Endoribonuclease YbeY (Ureaplasma parvum serovar 3 (strain ATCC 27815 / 27 / NCTC 11736)).